We begin with the raw amino-acid sequence, 120 residues long: NAD(P)H-quinone oxidoreductase subunit 3, chloroplastic (120 aa).

Transmembrane regions (helical) follow at residues 9–29 (IFWA…FISG), 64–84 (MFAL…PWAM), and 88–108 (VLGV…IVGS).

The protein belongs to the complex I subunit 3 family. NDH is composed of at least 16 different subunits, 5 of which are encoded in the nucleus.

It localises to the plastid. The protein localises to the chloroplast thylakoid membrane. It catalyses the reaction a plastoquinone + NADH + (n+1) H(+)(in) = a plastoquinol + NAD(+) + n H(+)(out). The enzyme catalyses a plastoquinone + NADPH + (n+1) H(+)(in) = a plastoquinol + NADP(+) + n H(+)(out). In terms of biological role, NDH shuttles electrons from NAD(P)H:plastoquinone, via FMN and iron-sulfur (Fe-S) centers, to quinones in the photosynthetic chain and possibly in a chloroplast respiratory chain. The immediate electron acceptor for the enzyme in this species is believed to be plastoquinone. Couples the redox reaction to proton translocation, and thus conserves the redox energy in a proton gradient. This chain is NAD(P)H-quinone oxidoreductase subunit 3, chloroplastic, found in Vitis vinifera (Grape).